The following is a 585-amino-acid chain: Arginine--tRNA ligase (585 aa).

The 'HIGH' region motif lies at 127–137 (PNTNKPLHVGH).

Belongs to the class-I aminoacyl-tRNA synthetase family. In terms of assembly, monomer.

The protein resides in the cytoplasm. The catalysed reaction is tRNA(Arg) + L-arginine + ATP = L-arginyl-tRNA(Arg) + AMP + diphosphate. The protein is Arginine--tRNA ligase of Borreliella afzelii (strain PKo) (Borrelia afzelii).